A 548-amino-acid polypeptide reads, in one-letter code: T-complex protein 1 subunit theta (548 aa).

Ala2 is modified (N-acetylalanine). Ser23 carries the phosphoserine modification. Tyr30 is modified (phosphotyrosine). The ADP site is built by Tyr47 and Gly48. Asp99 is a Mg(2+) binding site. Residues Gly100, Thr101, Asn102, and Phe103 each contribute to the ADP site. Residues Gly100, Thr101, and Asn102 each coordinate ATP. Ser162 carries the post-translational modification Phosphoserine. Positions 169, 170, and 171 each coordinate ADP. Residues Ser170 and Lys171 each contribute to the ATP site. Residues Lys224, Lys254, and Lys260 each participate in a glycyl lysine isopeptide (Lys-Gly) (interchain with G-Cter in SUMO2) cross-link. 2 positions are modified to phosphoserine: Ser269 and Ser317. Lys318 and Lys400 each carry N6-acetyllysine. Gly412 contacts ADP. Gly412 contributes to the ATP binding site. Residue Lys459 forms a Glycyl lysine isopeptide (Lys-Gly) (interchain with G-Cter in SUMO1) linkage. Lys466 is modified (N6-acetyllysine). Asp499 contributes to the ADP binding site. Positions 499 and 504 each coordinate ATP. Tyr505 bears the Phosphotyrosine mark. Residues 529–548 (PAGGPKPPSGKKDWDEDQND) form a disordered region. Lys534 is covalently cross-linked (Glycyl lysine isopeptide (Lys-Gly) (interchain with G-Cter in SUMO2)). Position 537 is a phosphoserine (Ser537). Residue Lys539 forms a Glycyl lysine isopeptide (Lys-Gly) (interchain with G-Cter in SUMO2) linkage.

It belongs to the TCP-1 chaperonin family. In terms of assembly, component of the chaperonin-containing T-complex (TRiC), a hexadecamer composed of two identical back-to-back stacked rings enclosing a protein folding chamber. Each ring is made up of eight different subunits: TCP1/CCT1, CCT2, CCT3, CCT4, CCT5, CCT6A/CCT6, CCT7, CCT8. Interacts with PACRG. Interacts with DNAAF4. Interacts with synaptic plasticity regulator PANTS.

It localises to the cytoplasm. Its subcellular location is the cytoskeleton. It is found in the microtubule organizing center. The protein resides in the centrosome. The protein localises to the cilium basal body. It carries out the reaction ATP + H2O = ADP + phosphate + H(+). Functionally, component of the chaperonin-containing T-complex (TRiC), a molecular chaperone complex that assists the folding of actin, tubulin and other proteins upon ATP hydrolysis. The TRiC complex mediates the folding of WRAP53/TCAB1, thereby regulating telomere maintenance. As part of the TRiC complex may play a role in the assembly of BBSome, a complex involved in ciliogenesis regulating transports vesicles to the cilia. In Bos taurus (Bovine), this protein is T-complex protein 1 subunit theta (CCT8).